Here is a 102-residue protein sequence, read N- to C-terminus: Small ribosomal subunit protein uS10 (102 aa).

Belongs to the universal ribosomal protein uS10 family. Part of the 30S ribosomal subunit.

In terms of biological role, involved in the binding of tRNA to the ribosomes. This is Small ribosomal subunit protein uS10 from Paracoccus denitrificans (strain Pd 1222).